Reading from the N-terminus, the 196-residue chain is Imidazoleglycerol-phosphate dehydratase (196 aa).

Belongs to the imidazoleglycerol-phosphate dehydratase family.

The protein localises to the cytoplasm. The catalysed reaction is D-erythro-1-(imidazol-4-yl)glycerol 3-phosphate = 3-(imidazol-4-yl)-2-oxopropyl phosphate + H2O. It participates in amino-acid biosynthesis; L-histidine biosynthesis; L-histidine from 5-phospho-alpha-D-ribose 1-diphosphate: step 6/9. The sequence is that of Imidazoleglycerol-phosphate dehydratase from Clostridium botulinum (strain Langeland / NCTC 10281 / Type F).